The sequence spans 171 residues: NADH-ubiquinone oxidoreductase chain 6 (171 aa).

5 helical membrane-spanning segments follow: residues 1–21 (MYVMFLLSILLVLGFVSISSK), 25–44 (IYGGVGLIVSGAVGCGIIMG), 49–71 (FMGLMVFLIYLGGMLVVFGYTTA), 85–105 (VVIWGVVLLGVGMELFMVAWM), and 150–170 (WFAAIAGWSLFISVLIVIEII).

Belongs to the complex I subunit 6 family. As to quaternary structure, core subunit of respiratory chain NADH dehydrogenase (Complex I) which is composed of 45 different subunits.

It is found in the mitochondrion inner membrane. It catalyses the reaction a ubiquinone + NADH + 5 H(+)(in) = a ubiquinol + NAD(+) + 4 H(+)(out). Functionally, core subunit of the mitochondrial membrane respiratory chain NADH dehydrogenase (Complex I) which catalyzes electron transfer from NADH through the respiratory chain, using ubiquinone as an electron acceptor. Essential for the catalytic activity and assembly of complex I. This chain is NADH-ubiquinone oxidoreductase chain 6 (MT-ND6), found in Lemur catta (Ring-tailed lemur).